The primary structure comprises 527 residues: Bifunctional purine biosynthesis protein PurH (527 aa).

The MGS-like domain occupies 1–149 (MASDFLPVRR…KNFARVAVAT (149 aa)).

It belongs to the PurH family.

It catalyses the reaction (6R)-10-formyltetrahydrofolate + 5-amino-1-(5-phospho-beta-D-ribosyl)imidazole-4-carboxamide = 5-formamido-1-(5-phospho-D-ribosyl)imidazole-4-carboxamide + (6S)-5,6,7,8-tetrahydrofolate. The enzyme catalyses IMP + H2O = 5-formamido-1-(5-phospho-D-ribosyl)imidazole-4-carboxamide. It functions in the pathway purine metabolism; IMP biosynthesis via de novo pathway; 5-formamido-1-(5-phospho-D-ribosyl)imidazole-4-carboxamide from 5-amino-1-(5-phospho-D-ribosyl)imidazole-4-carboxamide (10-formyl THF route): step 1/1. The protein operates within purine metabolism; IMP biosynthesis via de novo pathway; IMP from 5-formamido-1-(5-phospho-D-ribosyl)imidazole-4-carboxamide: step 1/1. The sequence is that of Bifunctional purine biosynthesis protein PurH from Xanthomonas oryzae pv. oryzae (strain MAFF 311018).